We begin with the raw amino-acid sequence, 381 residues long: UDP-4-amino-4-deoxy-L-arabinose--oxoglutarate aminotransferase (381 aa).

Lysine 182 carries the post-translational modification N6-(pyridoxal phosphate)lysine.

This sequence belongs to the DegT/DnrJ/EryC1 family. ArnB subfamily. In terms of assembly, homodimer. Requires pyridoxal 5'-phosphate as cofactor.

It carries out the reaction UDP-4-amino-4-deoxy-beta-L-arabinose + 2-oxoglutarate = UDP-beta-L-threo-pentopyranos-4-ulose + L-glutamate. It functions in the pathway nucleotide-sugar biosynthesis; UDP-4-deoxy-4-formamido-beta-L-arabinose biosynthesis; UDP-4-deoxy-4-formamido-beta-L-arabinose from UDP-alpha-D-glucuronate: step 2/3. The protein operates within bacterial outer membrane biogenesis; lipopolysaccharide biosynthesis. In terms of biological role, catalyzes the conversion of UDP-4-keto-arabinose (UDP-Ara4O) to UDP-4-amino-4-deoxy-L-arabinose (UDP-L-Ara4N). The modified arabinose is attached to lipid A and is required for resistance to polymyxin and cationic antimicrobial peptides. This Edwardsiella ictaluri (strain 93-146) protein is UDP-4-amino-4-deoxy-L-arabinose--oxoglutarate aminotransferase.